We begin with the raw amino-acid sequence, 151 residues long: MSTPDNRSVNFFSLFRRGQHYAKTWPMEKRLAPVFVENRVIRMTRYAIRFMPPVAVFTLCWQIALGGQLGPAVATALFALSLPMQGLWWLGKRSLTPLPPSILNWFYEVRGKLQEAGQALAPVEGKPDYQALADTLKRAFKQLDKTFLDDL.

Over 1–45 the chain is Cytoplasmic; it reads MSTPDNRSVNFFSLFRRGQHYAKTWPMEKRLAPVFVENRVIRMTR. Residues 46 to 65 form a helical membrane-spanning segment; it reads YAIRFMPPVAVFTLCWQIAL. Residues 66 to 68 are Periplasmic-facing; the sequence is GGQ. The chain crosses the membrane as a helical span at residues 69–91; the sequence is LGPAVATALFALSLPMQGLWWLG. Over 92–151 the chain is Cytoplasmic; sequence KRSLTPLPPSILNWFYEVRGKLQEAGQALAPVEGKPDYQALADTLKRAFKQLDKTFLDDL.

This sequence belongs to the UPF0208 family.

It localises to the cell inner membrane. This is UPF0208 membrane protein YfbV (yfbV) from Salmonella typhi.